A 149-amino-acid polypeptide reads, in one-letter code: Calmodulin (149 aa).

An N-acetylalanine modification is found at Ala2. EF-hand domains are found at residues 8–43, 44–79, 81–116, and 117–149; these read EQIA…LGQN, PTEA…KMKD, DSEE…LGEK, and LTDE…MMSK. Asp21, Asp23, Asp25, Thr27, Glu32, Asp57, Asp59, Asn61, Thr63, Glu68, Asp94, Asp96, Asn98, and Glu105 together coordinate Ca(2+). Residue Lys116 is modified to N6,N6,N6-trimethyllysine. Ca(2+)-binding residues include Asp130, Asp132, Asp134, Gln136, and Glu141.

Belongs to the calmodulin family.

Functionally, calmodulin mediates the control of a large number of enzymes, ion channels and other proteins by Ca(2+). Among the enzymes to be stimulated by the calmodulin-Ca(2+) complex are a number of protein kinases and phosphatases. This Saccharina japonica (Sweet kelp) protein is Calmodulin (cam).